The following is a 166-amino-acid chain: Cilia- and flagella-associated protein 68 (166 aa).

Mn regions lie at residues 98–109 and 139–149; these read TTYDANYSRKKP and KSTYMTNYSEP.

The protein belongs to the CFAP68 family. In terms of assembly, microtubule inner protein component of sperm flagellar doublet microtubules.

It localises to the cytoplasm. The protein localises to the cytoskeleton. Its subcellular location is the cilium axoneme. The protein resides in the flagellum axoneme. It is found in the nucleus. It localises to the cell projection. The protein localises to the cilium. In terms of biological role, microtubule inner protein (MIP) part of the dynein-decorated doublet microtubules (DMTs) in cilia axoneme, which is required for motile cilia beating. In Mus musculus (Mouse), this protein is Cilia- and flagella-associated protein 68 (Cfap68).